We begin with the raw amino-acid sequence, 182 residues long: Ribosome-recycling factor (182 aa).

It belongs to the RRF family.

It localises to the cytoplasm. Functionally, responsible for the release of ribosomes from messenger RNA at the termination of protein biosynthesis. May increase the efficiency of translation by recycling ribosomes from one round of translation to another. The polypeptide is Ribosome-recycling factor (Prochlorococcus marinus subsp. pastoris (strain CCMP1986 / NIES-2087 / MED4)).